The following is a 148-amino-acid chain: Ribonuclease H (148 aa).

One can recognise an RNase H type-1 domain in the interval 1–142 (MSDSVEIYTD…ADQLANRGVD (142 aa)). Mg(2+) contacts are provided by Asp-10, Glu-48, Asp-70, and Asp-134. A disordered region spans residues 129 to 148 (GNERADQLANRGVDEVRAQR).

This sequence belongs to the RNase H family. In terms of assembly, monomer. It depends on Mg(2+) as a cofactor.

It localises to the cytoplasm. It carries out the reaction Endonucleolytic cleavage to 5'-phosphomonoester.. Its function is as follows. Endonuclease that specifically degrades the RNA of RNA-DNA hybrids. The chain is Ribonuclease H from Pseudomonas entomophila (strain L48).